Consider the following 1139-residue polypeptide: Exportin-T (1139 aa).

A disordered region spans residues 562 to 589; sequence ARNKLRAAQGSGRTTPSSSDNVDLGPSS. The segment covering 572–589 has biased composition (polar residues); it reads SGRTTPSSSDNVDLGPSS.

It belongs to the exportin family.

Its subcellular location is the nucleus. It is found in the cytoplasm. In terms of biological role, tRNA nucleus export receptor which facilitates tRNA translocation across the nuclear pore complex. Involved in pre-tRNA splicing, probably by affecting the interaction of pre-tRNA with splicing endonuclease. The sequence is that of Exportin-T (LOS1) from Cryptococcus neoformans var. neoformans serotype D (strain B-3501A) (Filobasidiella neoformans).